A 913-amino-acid chain; its full sequence is Protein translocase subunit SecA (913 aa).

Residues Gln-87, Gly-105–Thr-109, and Asp-517 contribute to the ATP site. Disordered stretches follow at residues Glu-568–Ser-588 and Glu-871–Ser-913. Zn(2+) is bound by residues Cys-897, Cys-899, Cys-908, and His-909. A compositionally biased stretch (basic residues) spans Lys-903–Ser-913.

It belongs to the SecA family. Monomer and homodimer. Part of the essential Sec protein translocation apparatus which comprises SecA, SecYEG and auxiliary proteins SecDF-YajC and YidC. Requires Zn(2+) as cofactor.

It is found in the cell inner membrane. Its subcellular location is the cytoplasm. It carries out the reaction ATP + H2O + cellular proteinSide 1 = ADP + phosphate + cellular proteinSide 2.. In terms of biological role, part of the Sec protein translocase complex. Interacts with the SecYEG preprotein conducting channel. Has a central role in coupling the hydrolysis of ATP to the transfer of proteins into and across the cell membrane, serving both as a receptor for the preprotein-SecB complex and as an ATP-driven molecular motor driving the stepwise translocation of polypeptide chains across the membrane. This is Protein translocase subunit SecA from Coxiella burnetii (strain RSA 493 / Nine Mile phase I).